A 344-amino-acid chain; its full sequence is Heat-inducible transcription repressor HrcA (344 aa).

It belongs to the HrcA family.

Negative regulator of class I heat shock genes (grpE-dnaK-dnaJ and groELS operons). Prevents heat-shock induction of these operons. This is Heat-inducible transcription repressor HrcA from Streptococcus pneumoniae (strain ATCC 700669 / Spain 23F-1).